The chain runs to 201 residues: Dephospho-CoA kinase (201 aa).

In terms of domain architecture, DPCK spans 3 to 201; that stretch reads VIGLTGGIAS…WKERIEKNPR (199 aa). Residue 11-16 coordinates ATP; that stretch reads ASGKST.

This sequence belongs to the CoaE family.

It is found in the cytoplasm. It carries out the reaction 3'-dephospho-CoA + ATP = ADP + CoA + H(+). The protein operates within cofactor biosynthesis; coenzyme A biosynthesis; CoA from (R)-pantothenate: step 5/5. Functionally, catalyzes the phosphorylation of the 3'-hydroxyl group of dephosphocoenzyme A to form coenzyme A. The polypeptide is Dephospho-CoA kinase (Geobacter metallireducens (strain ATCC 53774 / DSM 7210 / GS-15)).